The chain runs to 260 residues: MELDEVIITRAIFEEYSKTFLEYTDIDVALVGGGPANLVAAKYLAEAGAKVAIYEQKLSLGGGMWAGGMMFPRIVVQEEACRVLDDFGIRYKEYEPGYFVANSVESVGKLIAGATSAGAEVFNLVSFEDIMIRENDRVTGIVINWGPVTTQRLHVDPLMIRTKLVIDGTGHDAVVCNTILRKIPNAKIGEFGILGEKPMWSEVGERLAVDATQEIYPGLIVAGMAANAATRAPRMGPVFGGMLLSGEKAAKLALDRLKKI.

NAD(+) contacts are provided by residues Ala-36, 55 to 56 (EQ), Gly-63, and 154 to 156 (HVD). Fe cation is bound by residues Asp-156 and His-171. Met-224 lines the NAD(+) pocket. Arg-234 is a glycine binding site.

This sequence belongs to the THI4 family. As to quaternary structure, homooctamer; tetramer of dimers. Requires Fe(2+) as cofactor.

It catalyses the reaction hydrogen sulfide + glycine + NAD(+) = ADP-5-ethyl-4-methylthiazole-2-carboxylate + nicotinamide + 3 H2O + H(+). The protein operates within cofactor biosynthesis; thiamine diphosphate biosynthesis. Involved in the biosynthesis of the thiazole moiety of thiamine. Catalyzes the conversion of NAD and glycine to adenosine diphosphate 5-(2-hydroxyethyl)-4-methylthiazole-2-carboxylate (ADT), an adenylated thiazole intermediate, using free sulfide as a source of sulfur. This Methanosarcina mazei (strain ATCC BAA-159 / DSM 3647 / Goe1 / Go1 / JCM 11833 / OCM 88) (Methanosarcina frisia) protein is Thiamine thiazole synthase.